We begin with the raw amino-acid sequence, 235 residues long: Small ribosomal subunit protein uS3 (235 aa).

A KH type-2 domain is found at 39–107 (IRDFIKKECH…ELHLNIVEVR (69 aa)). Residues 213 to 235 (AARDRKAQELQDGPAPRGAGGRR) form a disordered region.

This sequence belongs to the universal ribosomal protein uS3 family. Part of the 30S ribosomal subunit. Forms a tight complex with proteins S10 and S14.

Functionally, binds the lower part of the 30S subunit head. Binds mRNA in the 70S ribosome, positioning it for translation. In Roseobacter denitrificans (strain ATCC 33942 / OCh 114) (Erythrobacter sp. (strain OCh 114)), this protein is Small ribosomal subunit protein uS3.